We begin with the raw amino-acid sequence, 881 residues long: Armadillo repeat-containing protein 3 (881 aa).

12 ARM repeats span residues 15 to 54 (DVFDPITIESKKAATVVLMLKSPEEDILAKACEAIYKFAL), 57 to 96 (EENKATLLELGAVEPLTKLLTHEDKTVRRNAMMIFGILAS), 98 to 138 (SDVK…NMSV), 140 to 179 (YTGKVQIFEHGGLEPLIRLLSSSDPDVKKNSIECIYNLVQ), 181 to 220 (FQCRTTLQELNAIPPILELLRSEYPIIQLLALKTLGVITC), 222 to 262 (KEAR…NCLE), 264 to 304 (MDTM…KAAY), 306 to 345 (PENRKVFHEQEVEKCLVTLLGSDSDGTKIAASQAISALCE), 346 to 385 (NLSCKEFFNTQGIPQIVQLLRSDNEEVREAAALALANLTT), 388 to 427 (PANANAAAEADAIDPLINILSSKRDGAIANAATVLTNMAT), 429 to 468 (EPLRAIIQNHEIMHALLGPLHSTNTLVQSTAALTVAATAC), and 470 to 509 (VEARTQLRNCGGLVPLVGLLHSKNDEVRRHASWAVMVCAG). Residues Cys-507 and Cys-518 are each lipidated (S-palmitoyl cysteine). The tract at residues 605–659 (NNKSDTSPPPSMEDKSSDVGYGRSISSSSSLRRGSKEKANAIFGSPTEEKSEPAS) is disordered. A compositionally biased stretch (low complexity) spans 622-636 (DVGYGRSISSSSSLR).

As to quaternary structure, homodimer. Interacts with PIK3C3, PIK3R4 and BECN1. Interacts (via ARM domains) with ATG14. In terms of processing, palmitoylation is important for its function in autophagy. As to expression, testis-specific.

In terms of biological role, essential for male fertility and sperm motility. During spermatogenesis, promotes the autophagic degradation of excessive ribosomes, providing energy resources for mitochondria and thus ensuring sperm flagellar motility. The chain is Armadillo repeat-containing protein 3 (Armc3) from Mus musculus (Mouse).